The following is a 254-amino-acid chain: Type III pantothenate kinase (254 aa).

Position 22-29 (22-29 (VLGNTHVR)) interacts with ATP. Substrate-binding positions include tyrosine 89 and 93 to 96 (GLDR). Aspartate 95 serves as the catalytic Proton acceptor. Position 115 (aspartate 115) interacts with K(+). Threonine 118 is an ATP binding site. Threonine 173 is a substrate binding site.

This sequence belongs to the type III pantothenate kinase family. Homodimer. Requires NH4(+) as cofactor. It depends on K(+) as a cofactor.

It is found in the cytoplasm. It catalyses the reaction (R)-pantothenate + ATP = (R)-4'-phosphopantothenate + ADP + H(+). It functions in the pathway cofactor biosynthesis; coenzyme A biosynthesis; CoA from (R)-pantothenate: step 1/5. Catalyzes the phosphorylation of pantothenate (Pan), the first step in CoA biosynthesis. The sequence is that of Type III pantothenate kinase from Synechococcus sp. (strain JA-2-3B'a(2-13)) (Cyanobacteria bacterium Yellowstone B-Prime).